The chain runs to 336 residues: Dihydroorotate dehydrogenase (quinone) (336 aa).

FMN contacts are provided by residues 62-66 and Thr86; that span reads AGLDK. Lys66 lines the substrate pocket. 111 to 115 contributes to the substrate binding site; sequence NRMGF. Residues Asn139 and Asn172 each coordinate FMN. Asn172 is a binding site for substrate. Catalysis depends on Ser175, which acts as the Nucleophile. Substrate is bound at residue Asn177. FMN-binding residues include Lys217 and Thr245. 246 to 247 contacts substrate; the sequence is NT. FMN is bound by residues Gly268, Gly297, and 318–319; that span reads YT.

It belongs to the dihydroorotate dehydrogenase family. Type 2 subfamily. In terms of assembly, monomer. FMN is required as a cofactor.

Its subcellular location is the cell membrane. It carries out the reaction (S)-dihydroorotate + a quinone = orotate + a quinol. It functions in the pathway pyrimidine metabolism; UMP biosynthesis via de novo pathway; orotate from (S)-dihydroorotate (quinone route): step 1/1. Catalyzes the conversion of dihydroorotate to orotate with quinone as electron acceptor. The polypeptide is Dihydroorotate dehydrogenase (quinone) (Pseudoalteromonas translucida (strain TAC 125)).